Reading from the N-terminus, the 101-residue chain is NAD(P)H-quinone oxidoreductase subunit 4L, chloroplastic (101 aa).

3 helical membrane-spanning segments follow: residues 2-22 (MFER…YGLI), 32-52 (ICLE…SDLF), and 61-81 (IFAI…LSIL).

Belongs to the complex I subunit 4L family. In terms of assembly, NDH is composed of at least 16 different subunits, 5 of which are encoded in the nucleus.

The protein localises to the plastid. The protein resides in the chloroplast thylakoid membrane. The catalysed reaction is a plastoquinone + NADH + (n+1) H(+)(in) = a plastoquinol + NAD(+) + n H(+)(out). It carries out the reaction a plastoquinone + NADPH + (n+1) H(+)(in) = a plastoquinol + NADP(+) + n H(+)(out). Functionally, NDH shuttles electrons from NAD(P)H:plastoquinone, via FMN and iron-sulfur (Fe-S) centers, to quinones in the photosynthetic chain and possibly in a chloroplast respiratory chain. The immediate electron acceptor for the enzyme in this species is believed to be plastoquinone. Couples the redox reaction to proton translocation, and thus conserves the redox energy in a proton gradient. The polypeptide is NAD(P)H-quinone oxidoreductase subunit 4L, chloroplastic (Zea mays (Maize)).